A 122-amino-acid chain; its full sequence is Small ribosomal subunit protein uS13 (122 aa).

The interval 96 to 122 (PVRGQRTRTNARTRKGPKKTVGVRRAK) is disordered.

Belongs to the universal ribosomal protein uS13 family. Part of the 30S ribosomal subunit. Forms a loose heterodimer with protein S19. Forms two bridges to the 50S subunit in the 70S ribosome.

Its function is as follows. Located at the top of the head of the 30S subunit, it contacts several helices of the 16S rRNA. In the 70S ribosome it contacts the 23S rRNA (bridge B1a) and protein L5 of the 50S subunit (bridge B1b), connecting the 2 subunits; these bridges are implicated in subunit movement. Contacts the tRNAs in the A and P-sites. The chain is Small ribosomal subunit protein uS13 from Halothermothrix orenii (strain H 168 / OCM 544 / DSM 9562).